The sequence spans 398 residues: MKILVINCGSSSLKYQLINPETEEVFAKGLCERIGIDGSKLEYEVVAKDFEKKLETPMPSHKEALELVISHLTDKEIGVIASVDEVDAIGHRVVHGGEEFAQSVLINDAVLKAIEANNDLAPLHNPANLMGIRTCMELMPGKKNVAVFDTAFHQTMKPEAFMYPLPYEDYKELKVRKYGFHGTSHLYVSGIMREIMGNPEHSKIIVCHLGNGASITAVKDGKSVDTSMGLTPLQGLMMGTRCGDIDPAAVLFVKNKRGLTDAQMDDRMNKKSGILGLFGKSSDCRDLENAVVEGDERAILAESVSMHRLRSYIGAYAAIMGGVDAICFTGGIGENSSMTREKALEGLEFLGVELDKEINSVRKKGNVKLSKDSSKVLIYKIPTNEELVIARDTFRLAK.

Residue Asn-7 participates in Mg(2+) binding. Lys-14 lines the ATP pocket. A substrate-binding site is contributed by Arg-92. Residue Asp-149 is the Proton donor/acceptor of the active site. ATP is bound by residues 208 to 212 (HLGNG), 283 to 285 (DCR), and 331 to 335 (GIGEN). Glu-385 contacts Mg(2+).

Belongs to the acetokinase family. In terms of assembly, homodimer. The cofactor is Mg(2+). Requires Mn(2+) as cofactor.

The protein localises to the cytoplasm. It catalyses the reaction acetate + ATP = acetyl phosphate + ADP. It functions in the pathway metabolic intermediate biosynthesis; acetyl-CoA biosynthesis; acetyl-CoA from acetate: step 1/2. Functionally, catalyzes the formation of acetyl phosphate from acetate and ATP. Can also catalyze the reverse reaction. The polypeptide is Acetate kinase (Fusobacterium nucleatum subsp. nucleatum (strain ATCC 25586 / DSM 15643 / BCRC 10681 / CIP 101130 / JCM 8532 / KCTC 2640 / LMG 13131 / VPI 4355)).